We begin with the raw amino-acid sequence, 569 residues long: Nucleoprotein (569 aa).

The interval 54–241 (MRKERRDDND…IDTKKSSLNI (188 aa)) is binding site for the cap structure m7GTP. Residues Asp-389 and Glu-391 each coordinate Mn(2+). Zn(2+) is bound by residues Glu-399, Cys-506, His-509, and Cys-529. Mn(2+) is bound at residue Asp-533.

The protein belongs to the arenaviridae nucleocapsid protein family. Homomultimerizes to form the nucleocapsid. Binds to viral genomic RNA. Interacts with glycoprotein G2. Interacts with protein Z; this interaction probably directs the encapsidated genome to budding sites. Interacts with protein L; this interaction does not interfere with Z-L interaction. Interacts with host IKBKE (via Protein kinase domain); the interaction inhibits IKBKE kinase activity.

The protein resides in the virion. It is found in the host cytoplasm. In terms of biological role, encapsidates the genome, protecting it from nucleases. The encapsidated genomic RNA is termed the nucleocapsid (NC). Serves as template for viral transcription and replication. The increased presence of protein N in host cell does not seem to trigger the switch from transcription to replication as observed in other negative strain RNA viruses. Through the interaction with host IKBKE, strongly inhibits the phosphorylation and nuclear translocation of host IRF3, a protein involved in interferon activation pathway, leading to the inhibition of interferon-beta and IRF3-dependent promoters activation. Also encodes a functional 3'-5' exoribonuclease that degrades preferentially dsRNA substrates and thereby participates in the suppression of interferon induction. This chain is Nucleoprotein, found in Lassa virus (strain Mouse/Sierra Leone/Josiah/1976) (LASV).